The chain runs to 304 residues: Acetylglutamate kinase (304 aa).

Substrate contacts are provided by residues 82-83, arginine 104, and asparagine 197; that span reads GG.

The protein belongs to the acetylglutamate kinase family. ArgB subfamily.

It localises to the cytoplasm. The catalysed reaction is N-acetyl-L-glutamate + ATP = N-acetyl-L-glutamyl 5-phosphate + ADP. It functions in the pathway amino-acid biosynthesis; L-arginine biosynthesis; N(2)-acetyl-L-ornithine from L-glutamate: step 2/4. In terms of biological role, catalyzes the ATP-dependent phosphorylation of N-acetyl-L-glutamate. This is Acetylglutamate kinase from Prochlorococcus marinus (strain NATL1A).